Reading from the N-terminus, the 260-residue chain is UPF0246 protein APL_0602 (260 aa).

This sequence belongs to the UPF0246 family.

In Actinobacillus pleuropneumoniae serotype 5b (strain L20), this protein is UPF0246 protein APL_0602.